A 714-amino-acid chain; its full sequence is ATP-dependent DNA helicase DinG (714 aa).

Residues 17 to 294 (ALQDQIPDFI…TSMEQFRPKT (278 aa)) enclose the Helicase ATP-binding domain. Position 54 to 61 (54 to 61 (APTGVGKT)) interacts with ATP. Residues Cys120, Cys194, Cys199, and Cys205 each contribute to the [4Fe-4S] cluster site. Residues 248–251 (DEGH) carry the DEAH box motif. Positions 517–698 (HIAEMAAYFR…VFPIEQPAVP (182 aa)) constitute a Helicase C-terminal domain.

Belongs to the helicase family. DinG subfamily. Type 1 sub-subfamily. The cofactor is [4Fe-4S] cluster.

The enzyme catalyses Couples ATP hydrolysis with the unwinding of duplex DNA at the replication fork by translocating in the 5'-3' direction. This creates two antiparallel DNA single strands (ssDNA). The leading ssDNA polymer is the template for DNA polymerase III holoenzyme which synthesizes a continuous strand.. It carries out the reaction ATP + H2O = ADP + phosphate + H(+). Its function is as follows. DNA-dependent ATPase and 5'-3' DNA helicase. Unwinds D-loops, R-loops, forked DNA and G-quadruplex DNA. In Salmonella choleraesuis (strain SC-B67), this protein is ATP-dependent DNA helicase DinG.